Consider the following 361-residue polypeptide: Neuronal-specific septin-3 (361 aa).

Positions 1-46 (MSEIVPPEVRPKPAVPAKPSHVAPPSSAPFVPSPQGTGGEGQGSGR) are disordered. A compositionally biased stretch (low complexity) spans 15-34 (VPAKPSHVAPPSSAPFVPSP). Over residues 36–46 (GTGGEGQGSGR) the composition is skewed to gly residues. One can recognise a Septin-type G domain in the interval 70–342 (AGFDFNIMVV…ETYRAKRLND (273 aa)). Residues 80-87 (GQSGLGKS) form a G1 motif region. GTP is bound by residues 80–87 (GQSGLGKS) and Thr-114. Positions 137–140 (DTPG) are G3 motif. The segment at 219 to 222 (AKSD) is G4 motif. GTP-binding positions include 220–228 (KSDTLTPEE), Gly-276, and Arg-291. Residues 341-361 (NDNGGLHPISSSGHDTQESNL) are disordered. Polar residues predominate over residues 349-361 (ISSSGHDTQESNL).

The protein belongs to the TRAFAC class TrmE-Era-EngA-EngB-Septin-like GTPase superfamily. Septin GTPase family.

It localises to the cytoplasm. In terms of biological role, may be involved in cytokinesis. This Danio rerio (Zebrafish) protein is Neuronal-specific septin-3.